The sequence spans 523 residues: Ribonuclease Y (523 aa).

Residues Val-3 to Ile-23 form a helical membrane-spanning segment. Residues Leu-213–Asp-279 enclose the KH domain. The HD domain occupies Ala-339–Ala-432.

Belongs to the RNase Y family.

The protein resides in the cell membrane. Its function is as follows. Endoribonuclease that initiates mRNA decay. The protein is Ribonuclease Y of Helicobacter hepaticus (strain ATCC 51449 / 3B1).